The following is a 264-amino-acid chain: Thymidylate synthase (264 aa).

R21 lines the dUMP pocket. H51 contacts (6R)-5,10-methylene-5,6,7,8-tetrahydrofolate. 126-127 (RR) is a dUMP binding site. The Nucleophile role is filled by C146. DUMP-binding positions include 166 to 169 (RSCD), N177, and 207 to 209 (HLY). Residue D169 coordinates (6R)-5,10-methylene-5,6,7,8-tetrahydrofolate. A263 is a (6R)-5,10-methylene-5,6,7,8-tetrahydrofolate binding site.

It belongs to the thymidylate synthase family. Bacterial-type ThyA subfamily. Homodimer.

The protein resides in the cytoplasm. It catalyses the reaction dUMP + (6R)-5,10-methylene-5,6,7,8-tetrahydrofolate = 7,8-dihydrofolate + dTMP. Its pathway is pyrimidine metabolism; dTTP biosynthesis. Catalyzes the reductive methylation of 2'-deoxyuridine-5'-monophosphate (dUMP) to 2'-deoxythymidine-5'-monophosphate (dTMP) while utilizing 5,10-methylenetetrahydrofolate (mTHF) as the methyl donor and reductant in the reaction, yielding dihydrofolate (DHF) as a by-product. This enzymatic reaction provides an intracellular de novo source of dTMP, an essential precursor for DNA biosynthesis. The sequence is that of Thymidylate synthase from Shigella dysenteriae serotype 1 (strain Sd197).